The chain runs to 538 residues: Neutral protease B (538 aa).

The N-terminal stretch at 1–28 (MRNLTKTSLLLAGLCTAAQMVFVTHASA) is a signal peptide. Residues 29 to 223 (EESIEYDHTY…VIESFNAIHE (195 aa)) constitute a propeptide, activation peptide. Position 365 (D365) interacts with Ca(2+). H369 serves as a coordination point for Zn(2+). E370 is a catalytic residue. The Zn(2+) site is built by H373 and E393. Residues D404, D406, D407, E409, E412, Y415, T416, I419, and D422 each coordinate Ca(2+). A disordered region spans residues 421–441 (GDSLRSLEDPSKQGNPDHYSN). H453 functions as the Proton donor in the catalytic mechanism.

This sequence belongs to the peptidase M4 family. Requires Zn(2+) as cofactor.

It is found in the secreted. Its activity is regulated as follows. Protease activity can be inhibited in vitro by either a zinc specific chelator, 1,10-phenanthroline, or a metal chelator, EDTA. The enzyme is resistant to phenylmethylsulfonyl fluoride and iodoacetic acid. Its function is as follows. Protease able to cleave casein in vitro. This Bacillus subtilis (strain 168) protein is Neutral protease B.